Consider the following 43-residue polypeptide: Protein PsbN (43 aa).

A helical membrane pass occupies residues Thr5 to Phe27.

It belongs to the PsbN family.

It is found in the plastid. Its subcellular location is the chloroplast thylakoid membrane. May play a role in photosystem I and II biogenesis. The protein is Protein PsbN of Calycanthus floridus (Eastern sweetshrub).